The sequence spans 395 residues: Elongation factor Tu (395 aa).

One can recognise a tr-type G domain in the interval 10–204 (KPHVNIGTIG…EVDAYIPTPE (195 aa)). The tract at residues 19–26 (GHVDHGKT) is G1. 19–26 (GHVDHGKT) contributes to the GTP binding site. A Mg(2+)-binding site is contributed by threonine 26. Residues 60–64 (GITIS) form a G2 region. Residues 81–84 (DCPG) form a G3 region. GTP is bound by residues 81–85 (DCPGH) and 136–139 (NKCD). The G4 stretch occupies residues 136–139 (NKCD). The tract at residues 174–176 (SAL) is G5.

The protein belongs to the TRAFAC class translation factor GTPase superfamily. Classic translation factor GTPase family. EF-Tu/EF-1A subfamily. As to quaternary structure, monomer.

The protein localises to the cytoplasm. The catalysed reaction is GTP + H2O = GDP + phosphate + H(+). GTP hydrolase that promotes the GTP-dependent binding of aminoacyl-tRNA to the A-site of ribosomes during protein biosynthesis. The sequence is that of Elongation factor Tu from Bacillus anthracis (strain A0248).